Consider the following 290-residue polypeptide: D-tagatose-1,6-bisphosphate aldolase subunit KbaY (290 aa).

Aspartate 82 acts as the Proton donor in catalysis. Zn(2+)-binding residues include histidine 83 and histidine 180. Residue glycine 181 coordinates dihydroxyacetone phosphate. Histidine 208 serves as a coordination point for Zn(2+). Residues glycine 209–serine 211 and asparagine 230–threonine 233 each bind dihydroxyacetone phosphate.

Belongs to the class II fructose-bisphosphate aldolase family. TagBP aldolase KbaY subfamily. As to quaternary structure, homotetramer. Forms a complex with KbaZ. The cofactor is Zn(2+).

The catalysed reaction is D-tagatofuranose 1,6-bisphosphate = D-glyceraldehyde 3-phosphate + dihydroxyacetone phosphate. The protein operates within carbohydrate metabolism; D-tagatose 6-phosphate degradation; D-glyceraldehyde 3-phosphate and glycerone phosphate from D-tagatose 6-phosphate: step 2/2. Functionally, catalytic subunit of the tagatose-1,6-bisphosphate aldolase KbaYZ, which catalyzes the reversible aldol condensation of dihydroxyacetone phosphate (DHAP or glycerone-phosphate) with glyceraldehyde 3-phosphate (G3P) to produce tagatose 1,6-bisphosphate (TBP). Requires KbaZ subunit for full activity and stability. The sequence is that of D-tagatose-1,6-bisphosphate aldolase subunit KbaY from Citrobacter koseri (strain ATCC BAA-895 / CDC 4225-83 / SGSC4696).